Reading from the N-terminus, the 217-residue chain is Pyrophosphatase PpaX (217 aa).

The Nucleophile role is filled by D11.

The protein belongs to the HAD-like hydrolase superfamily. PpaX family. Mg(2+) is required as a cofactor.

It carries out the reaction diphosphate + H2O = 2 phosphate + H(+). Hydrolyzes pyrophosphate formed during P-Ser-HPr dephosphorylation by HPrK/P. Might play a role in controlling the intracellular pyrophosphate pool. This chain is Pyrophosphatase PpaX, found in Listeria monocytogenes serotype 4a (strain HCC23).